A 347-amino-acid chain; its full sequence is MASNSALLMKTIFLVLIFVSFAISPATSTAPEECGSESANPCVNKAKALPLKVIAIFVILIASMIGVGAPLFSRNVSFLQPDGNIFTIIKCFASGIILGTGFMHVLPDSFEMLSSICLEENPWHKFPFSGFLAMLSGLITLAIDSMATSLYTSKNAVGIMPHGHGHGHGPANDVTLPIKEDDSSNAQLLRYRVIAMVLELGIIVHSVVIGLSLGATSDTCTIKGLIAALCFHQMFEGMGLGGCILQAEYTNMKKFVMAFFFAVTTPFGIALGIALSTVYQDNSPKALITVGLLNACSAGLLIYMALVDLLAAEFMGPKLQGSIKMQFKCLIAALLGCGGMSIIAKWA.

An N-terminal signal peptide occupies residues 1–22; it reads MASNSALLMKTIFLVLIFVSFA. Residues 23 to 52 lie on the Extracellular side of the membrane; sequence ISPATSTAPEECGSESANPCVNKAKALPLK. The helical transmembrane segment at 53 to 73 threads the bilayer; the sequence is VIAIFVILIASMIGVGAPLFS. The Cytoplasmic portion of the chain corresponds to 74-84; that stretch reads RNVSFLQPDGN. A helical transmembrane segment spans residues 85–105; the sequence is IFTIIKCFASGIILGTGFMHV. At 106–125 the chain is on the extracellular side; that stretch reads LPDSFEMLSSICLEENPWHK. A helical transmembrane segment spans residues 126-146; the sequence is FPFSGFLAMLSGLITLAIDSM. The Cytoplasmic portion of the chain corresponds to 147–192; sequence ATSLYTSKNAVGIMPHGHGHGHGPANDVTLPIKEDDSSNAQLLRYR. Residues Lys-154 and Lys-179 each participate in a glycyl lysine isopeptide (Lys-Gly) (interchain with G-Cter in ubiquitin) cross-link. Residues 193 to 213 form a helical membrane-spanning segment; that stretch reads VIAMVLELGIIVHSVVIGLSL. Residues 214–224 are Extracellular-facing; sequence GATSDTCTIKG. The chain crosses the membrane as a helical span at residues 225–245; it reads LIAALCFHQMFEGMGLGGCIL. At 246 to 254 the chain is on the cytoplasmic side; that stretch reads QAEYTNMKK. A helical transmembrane segment spans residues 255-275; that stretch reads FVMAFFFAVTTPFGIALGIAL. At 276–286 the chain is on the extracellular side; it reads STVYQDNSPKA. The helical transmembrane segment at 287–307 threads the bilayer; the sequence is LITVGLLNACSAGLLIYMALV. Over 308 to 326 the chain is Cytoplasmic; the sequence is DLLAAEFMGPKLQGSIKMQ. Residues 327–347 traverse the membrane as a helical segment; sequence FKCLIAALLGCGGMSIIAKWA.

The protein belongs to the ZIP transporter (TC 2.A.5) family. As to quaternary structure, interacts with FREE1. In terms of processing, monoubiquitinated on several Lys residues. Monoubiquitination controls trafficking from the plasma membrane and targeting to the vacuole. In terms of tissue distribution, expressed in the external cell layers of the root including the lateral branching zone. Also detected in flowers before pollination.

Its subcellular location is the cell membrane. The protein resides in the early endosome. The protein localises to the golgi apparatus. It localises to the trans-Golgi network. It is found in the vacuole. High-affinity iron transporter that plays a key role in the uptake of iron from the rhizosphere across the plasma membrane in the root epidermal layer. Acts as the principal regulator of iron homeostasis in planta. Also mediates the heavy metals uptake under iron-deficiency by its ability to transport cobalt, cadmium, manganese and/or zinc ions. In Arabidopsis thaliana (Mouse-ear cress), this protein is Fe(2+) transport protein 1 (IRT1).